The chain runs to 363 residues: MNAAEWVAELKRKSQIESFKEQKGLVYDDHIEKVLYSGSVNGTLLVIEGNSCSGKTELLYHLASNVLLRSSQELVLIVSSEWDWSIKRLTFILHERLISSRGVSQTCKCNCAVKLENESTVHLQNAAREDGTDEDINSNSVNDVSLSSGETMLQFPEHEEQHECNREMEQLYESASSTVYPCSFWEDAERKIDAQCAILWPMEFSGVVESIPQSTKDLLRIWKEAKIQMHEDFRCNKTEFNEACFDASSSRLGCILMDGLSTFYWQLRLERGYTQVYADLQNRLCTSSKLFGCPVVCTNWLLNNKQHLPIQCKRFRSERRANARFYLENCVSKLGETFYLSVKGVQTKTEMASPYSQQEMEKV.

Belongs to the RecA family. RAD51 subfamily. In terms of assembly, interacts with rdl1 and sws1.

Its subcellular location is the cytoplasm. It localises to the nucleus. Functionally, required for normal levels of meiotic recombination. Acts in the recombinational pathway of double-strand break (DSB) repair together with rhp51, rhp55 and rad22. Required for the full extent of DNA recombination and cell survival under condition of a replication fork collapse. This Schizosaccharomyces pombe (strain 972 / ATCC 24843) (Fission yeast) protein is DNA repair protein rlp1.